Consider the following 545-residue polypeptide: MAELTINADDVRNALNEFAASYEPGNAERVEVGRVTTASDGIARVEGLPSVMANELLRFEDGTLGLAQNLDVREIGVIILGDFTGIEEGQEVHRTGQVLSVPVGDAFLGRVVDPLGVPIDDLGEIKAETTRALELQAPGVTQRKSVHEPMQTGLKAIDAMIPIGRGQRQLIIGDRQTGKSAIAIDTIINQKANWASGDVTKQVRCIYVAIGQKASTIAAVRQTLEENGALEYTTIVASPASDPAGFKYLAPYAGSAIGQHWMYGGKHVLIVFDDLSKQAEAYRAVSLLLRRPPGREAYPGDVFYLHSRLLERCAKLSDELGAGSMTGLPLIETKANDVSAYIPTNVISITDGQIFLQSDLFNANQRPAVDVGVSVSRVGGAAQVKSMKKVSGTLKLELAQYRDMQAFAMFASDLDAASRQQLTRGARLMELLKQGQYSPFPVEDQVVSIWAGTNGHLDDVPVEDVNRFETEFLEHLKHKSSILTTLAQTNVMDDDTAAALKSSIIDFKKGFFGEGDNHLVGAGHEAHDAISEGEVDQEKIVKQKR.

Residue 173-180 coordinates ATP; that stretch reads GDRQTGKS.

Belongs to the ATPase alpha/beta chains family. In terms of assembly, F-type ATPases have 2 components, CF(1) - the catalytic core - and CF(0) - the membrane proton channel. CF(1) has five subunits: alpha(3), beta(3), gamma(1), delta(1), epsilon(1). CF(0) has three main subunits: a(1), b(2) and c(9-12). The alpha and beta chains form an alternating ring which encloses part of the gamma chain. CF(1) is attached to CF(0) by a central stalk formed by the gamma and epsilon chains, while a peripheral stalk is formed by the delta and b chains.

The protein localises to the cell membrane. The enzyme catalyses ATP + H2O + 4 H(+)(in) = ADP + phosphate + 5 H(+)(out). In terms of biological role, produces ATP from ADP in the presence of a proton gradient across the membrane. The alpha chain is a regulatory subunit. The polypeptide is ATP synthase subunit alpha (Pseudarthrobacter chlorophenolicus (strain ATCC 700700 / DSM 12829 / CIP 107037 / JCM 12360 / KCTC 9906 / NCIMB 13794 / A6) (Arthrobacter chlorophenolicus)).